The sequence spans 167 residues: Peptide deformylase (167 aa).

Fe cation-binding residues include C91 and H133. The active site involves E134. H137 lines the Fe cation pocket.

The protein belongs to the polypeptide deformylase family. It depends on Fe(2+) as a cofactor.

It catalyses the reaction N-terminal N-formyl-L-methionyl-[peptide] + H2O = N-terminal L-methionyl-[peptide] + formate. In terms of biological role, removes the formyl group from the N-terminal Met of newly synthesized proteins. Requires at least a dipeptide for an efficient rate of reaction. N-terminal L-methionine is a prerequisite for activity but the enzyme has broad specificity at other positions. The polypeptide is Peptide deformylase (Chromobacterium violaceum (strain ATCC 12472 / DSM 30191 / JCM 1249 / CCUG 213 / NBRC 12614 / NCIMB 9131 / NCTC 9757 / MK)).